Consider the following 130-residue polypeptide: Anti-adapter protein IraD (130 aa).

This sequence belongs to the GpW/Gp25 family. IraD subfamily. Interacts with RssB.

The protein resides in the cytoplasm. In terms of biological role, inhibits RpoS proteolysis by regulating RssB activity, thereby increasing the stability of the sigma stress factor RpoS during oxidative stress. Its effect on RpoS stability is due to its interaction with RssB, which probably blocks the interaction of RssB with RpoS, and the consequent delivery of the RssB-RpoS complex to the ClpXP protein degradation pathway. This is Anti-adapter protein IraD from Shigella boydii serotype 4 (strain Sb227).